The following is a 77-amino-acid chain: ATP synthase subunit c (77 aa).

2 helical membrane passes run 10-30 and 57-77; these read IAVALLIGFGAIGTAVGFGNM and GLIDAVAMIGVGIAMVLLFVL.

Belongs to the ATPase C chain family. F-type ATPases have 2 components, F(1) - the catalytic core - and F(0) - the membrane proton channel. F(1) has five subunits: alpha(3), beta(3), gamma(1), delta(1), epsilon(1). F(0) has three main subunits: a(1), b(2) and c(10-14). The alpha and beta chains form an alternating ring which encloses part of the gamma chain. F(1) is attached to F(0) by a central stalk formed by the gamma and epsilon chains, while a peripheral stalk is formed by the delta and b chains.

It localises to the cell inner membrane. Functionally, f(1)F(0) ATP synthase produces ATP from ADP in the presence of a proton or sodium gradient. F-type ATPases consist of two structural domains, F(1) containing the extramembraneous catalytic core and F(0) containing the membrane proton channel, linked together by a central stalk and a peripheral stalk. During catalysis, ATP synthesis in the catalytic domain of F(1) is coupled via a rotary mechanism of the central stalk subunits to proton translocation. Key component of the F(0) channel; it plays a direct role in translocation across the membrane. A homomeric c-ring of between 10-14 subunits forms the central stalk rotor element with the F(1) delta and epsilon subunits. In Pseudoalteromonas translucida (strain TAC 125), this protein is ATP synthase subunit c.